Reading from the N-terminus, the 94-residue chain is Large ribosomal subunit protein bL27 (94 aa).

The propeptide occupies 1 to 9 (MLRLDLQFF).

This sequence belongs to the bacterial ribosomal protein bL27 family. In terms of assembly, part of the 50S ribosomal subunit. Post-translationally, the N-terminus is cleaved by ribosomal processing cysteine protease Prp.

Plays a role in sporulation at high temperatures. The protein is Large ribosomal subunit protein bL27 (rpmA) of Bacillus subtilis (strain 168).